Consider the following 382-residue polypeptide: Trophoblast glycoprotein-like (382 aa).

The N-terminal stretch at 1–26 (MAPRAGQPGLQGLLLVAAALSQPAAP) is a signal peptide. Intrachain disulfides connect cysteine 27/cysteine 33 and cysteine 31/cysteine 43. Residues 27-307 (CPFQCYCFGG…EAAGPELEAS (281 aa)) are Extracellular-facing. LRR repeat units follow at residues 57 to 80 (PPDA…AFAG), 93 to 116 (LPLL…AFDG), 117 to 140 (LPSL…AFRG), 171 to 194 (LAEL…ALRL), and 196 to 217 (RLEQ…ELRA). Asparagine 62 is a glycosylation site (N-linked (GlcNAc...) asparagine). Intrachain disulfides connect cysteine 238–cysteine 264 and cysteine 240–cysteine 285. Residues 308–328 (YVFFGLVLALIGLIFLMVLYL) traverse the membrane as a helical segment. Residues 329-382 (NRRGIQRWMRNLREACRDQMEGYHYRYEQDADPRRAPAPAAPAGSRATSPGSGL) lie on the Cytoplasmic side of the membrane. Residues 358–382 (DADPRRAPAPAAPAGSRATSPGSGL) are disordered. Over residues 365 to 382 (PAPAAPAGSRATSPGSGL) the composition is skewed to low complexity.

It is found in the membrane. This chain is Trophoblast glycoprotein-like (TPBGL), found in Homo sapiens (Human).